The chain runs to 442 residues: UPF0489 protein C5orf22 homolog (442 aa).

Residues Ser-175–Thr-208 are disordered. Polar residues predominate over residues Asn-189–Glu-200.

The protein belongs to the UPF0489 family.

The polypeptide is UPF0489 protein C5orf22 homolog (Pongo abelii (Sumatran orangutan)).